We begin with the raw amino-acid sequence, 153 residues long: D-aminoacyl-tRNA deacylase (153 aa).

A Gly-cisPro motif, important for rejection of L-amino acids motif is present at residues 142-143 (GP).

The protein belongs to the DTD family. As to quaternary structure, homodimer.

The protein localises to the cytoplasm. It carries out the reaction glycyl-tRNA(Ala) + H2O = tRNA(Ala) + glycine + H(+). The enzyme catalyses a D-aminoacyl-tRNA + H2O = a tRNA + a D-alpha-amino acid + H(+). Functionally, an aminoacyl-tRNA editing enzyme that deacylates mischarged D-aminoacyl-tRNAs. Also deacylates mischarged glycyl-tRNA(Ala), protecting cells against glycine mischarging by AlaRS. Acts via tRNA-based rather than protein-based catalysis; rejects L-amino acids rather than detecting D-amino acids in the active site. By recycling D-aminoacyl-tRNA to D-amino acids and free tRNA molecules, this enzyme counteracts the toxicity associated with the formation of D-aminoacyl-tRNA entities in vivo and helps enforce protein L-homochirality. This is D-aminoacyl-tRNA deacylase from Cupriavidus necator (strain ATCC 17699 / DSM 428 / KCTC 22496 / NCIMB 10442 / H16 / Stanier 337) (Ralstonia eutropha).